We begin with the raw amino-acid sequence, 639 residues long: Extracellular metalloproteinase NpIII (639 aa).

An N-terminal signal peptide occupies residues 1-16 (MHMLLFIGALALPVFV). Residues 17–245 (CTQSCEPASL…IHGVVDYVSE (229 aa)) constitute a propeptide that is removed on maturation. N-linked (GlcNAc...) asparagine glycosylation is found at Asn287, Asn320, Asn336, and Asn368. Position 429 (His429) interacts with Zn(2+). The active site involves Glu430. His433 serves as a coordination point for Zn(2+). Asn509 carries N-linked (GlcNAc...) asparagine glycosylation.

It belongs to the peptidase M36 family. Requires Zn(2+) as cofactor.

It is found in the secreted. Secreted metalloproteinase that allows assimilation of proteinaceous substrates. This is Extracellular metalloproteinase NpIII (NpIII) from Aspergillus oryzae (strain ATCC 42149 / RIB 40) (Yellow koji mold).